The following is a 498-amino-acid chain: MASQGTKRSYEQMETGGERQNATEIRASVGRMVSGIGRFYIQMCTELKLSDYEGRLIQNSITIERMVLSAFDERRNRYLEEHPSAGKDPKKTGGPIYRRRDGKWVRELILYDKEEIRRIWRQANNGEDATAGLTHLMIWHSNLNDATYQRTRALVRTGMDPRMCSLMQGSTLPRRSGAAGAAVKGVGTMVMELIRMIKRGINDRNFWRGENGRRTRIAYERMCNILKGKFQTAAQRAMMDQVRESRNPGNAEIEDLIFLARSALILRGSVAHKSCLPACVYGLAVASGYDFEREGYSLVGIDPFRLLQNSQVFSLIRPNENPAHKSQLVWMACHSAAFEDLRVSSFIRGTRVVPRGQLSTRGVQIASNENMEAMDSNTLELRSRYWAIRTRSGGNTNQQRASAGQISVQPTFSVQRNLPFERSTIMAAFTGNTEGRTSDMRTEIIRMMESARPEDVSFQGRGVFELSDEKATNPIVPSFDMNNEGSYFFGDNAEEYDN.

Positions 1–18 (MASQGTKRSYEQMETGGE) match the Unconventional nuclear localization signal motif. Residues 1–21 (MASQGTKRSYEQMETGGERQN) form a disordered region. Residues 198–216 (KRGINDRNFWRGENGRRTR) carry the Bipartite nuclear localization signal motif.

This sequence belongs to the influenza viruses nucleoprotein family. In terms of assembly, homomultimerizes to form the nucleocapsid. May bind host exportin-1/XPO1. Binds to viral genomic RNA. Protein-RNA contacts are mediated by a combination of electrostatic interactions between positively charged residues and the phosphate backbone and planar interactions between aromatic side chains and bases. Late in virus-infected cells, may be cleaved from a 56-kDa protein to a 53-kDa protein by a cellular caspase. This cleavage might be a marker for the onset of apoptosis in infected cells or have a specific function in virus host interaction.

The protein resides in the virion. Its subcellular location is the host nucleus. In terms of biological role, encapsidates the negative strand viral RNA, protecting it from nucleases. The encapsidated genomic RNA is termed the ribonucleoprotein (RNP) and serves as template for transcription and replication. The RNP needs to be localized in the host nucleus to start an infectious cycle, but is too large to diffuse through the nuclear pore complex. NP comprises at least 2 nuclear localization signals that are responsible for the active RNP import into the nucleus through cellular importin alpha/beta pathway. Later in the infection, nclear export of RNPs are mediated through viral proteins NEP interacting with M1 which binds nucleoproteins. It is possible that nucleoprotein binds directly host exportin-1/XPO1 and plays an active role in RNPs nuclear export. M1 interaction with RNP seems to hide nucleoprotein's nuclear localization signals. Soon after a virion infects a new cell, M1 dissociates from the RNP under acidification of the virion driven by M2 protein. Dissociation of M1 from RNP unmasks nucleoprotein's nuclear localization signals, targeting the RNP to the nucleus. The chain is Nucleoprotein from Influenza A virus (strain A/Hong Kong/212/2003 H5N1 genotype Z+).